The following is a 282-amino-acid chain: Acetyl-coenzyme A carboxylase carboxyl transferase subunit beta (282 aa).

The region spanning I23–A282 is the CoA carboxyltransferase N-terminal domain. Zn(2+) is bound by residues C27, C30, C46, and C49. Residues C27 to C49 form a C4-type zinc finger.

Belongs to the AccD/PCCB family. Acetyl-CoA carboxylase is a heterohexamer composed of biotin carboxyl carrier protein (AccB), biotin carboxylase (AccC) and two subunits each of ACCase subunit alpha (AccA) and ACCase subunit beta (AccD). It depends on Zn(2+) as a cofactor.

Its subcellular location is the cytoplasm. It catalyses the reaction N(6)-carboxybiotinyl-L-lysyl-[protein] + acetyl-CoA = N(6)-biotinyl-L-lysyl-[protein] + malonyl-CoA. It functions in the pathway lipid metabolism; malonyl-CoA biosynthesis; malonyl-CoA from acetyl-CoA: step 1/1. Functionally, component of the acetyl coenzyme A carboxylase (ACC) complex. Biotin carboxylase (BC) catalyzes the carboxylation of biotin on its carrier protein (BCCP) and then the CO(2) group is transferred by the transcarboxylase to acetyl-CoA to form malonyl-CoA. The protein is Acetyl-coenzyme A carboxylase carboxyl transferase subunit beta of Pseudoalteromonas atlantica (strain T6c / ATCC BAA-1087).